Reading from the N-terminus, the 154-residue chain is Large ribosomal subunit protein uL22c (154 aa).

It belongs to the universal ribosomal protein uL22 family. Part of the 50S ribosomal subunit.

The protein localises to the plastid. The protein resides in the chloroplast. Functionally, this protein binds specifically to 23S rRNA. In terms of biological role, the globular domain of the protein is located near the polypeptide exit tunnel on the outside of the subunit, while an extended beta-hairpin is found that lines the wall of the exit tunnel in the center of the 70S ribosome. This chain is Large ribosomal subunit protein uL22c (rpl22), found in Platanus occidentalis (Sycamore).